The sequence spans 487 residues: Solute carrier family 22 member 15-like (487 aa).

The helical transmembrane segment at 23 to 43 (FLTLLQIYVACQSMLIVLVGA) threads the bilayer. Asn-70 is a glycosylation site (N-linked (GlcNAc...) asparagine). A run of 11 helical transmembrane segments spans residues 90-110 (LASS…GPLS), 117-137 (PVYL…ALAP), 141-161 (VFAV…LVSF), 178-198 (SLTN…GFYI), 203-223 (TLAF…FVLP), 286-306 (ILLM…TLNA), 315-335 (LNVA…LYFI), 345-365 (ATAG…FVPE), 374-394 (TVLA…VYIY), 408-428 (LGVC…IPAM), and 435-455 (MPFV…LLLP).

This sequence belongs to the major facilitator (TC 2.A.1) superfamily. Organic cation transporter (TC 2.A.1.19) family.

It is found in the membrane. Probably transports organic cations. The polypeptide is Solute carrier family 22 member 15-like (slc22a15b) (Xenopus laevis (African clawed frog)).